The chain runs to 114 residues: UPF0102 protein Shew_0226 (114 aa).

It belongs to the UPF0102 family.

This Shewanella loihica (strain ATCC BAA-1088 / PV-4) protein is UPF0102 protein Shew_0226.